Here is a 380-residue protein sequence, read N- to C-terminus: Protein Wnt-5a (380 aa).

The N-terminal stretch at 1-35 is a signal peptide; the sequence is MKKSIGILSPGVALGTAGSAMSSKFFVMALAVFFS. Positions 36-61 are excised as a propeptide; that stretch reads FAQVVIEANSWWSLGMNNPVQMSEVY. C104 and C115 are oxidised to a cystine. N-linked (GlcNAc...) asparagine glycans are attached at residues N114 and N120. 10 cysteine pairs are disulfide-bonded: C154–C162, C164–C182, C238–C252, C240–C247, C309–C340, C325–C335, C339–C379, C355–C370, C357–C367, and C362–C363. S244 carries O-palmitoleoyl serine; by PORCN lipidation. 2 N-linked (GlcNAc...) asparagine glycosylation sites follow: N312 and N326.

The protein belongs to the Wnt family. Forms a soluble 1:1 complex with AFM; this prevents oligomerization and is required for prolonged biological activity. The complex with AFM may represent the physiological form in body fluids. Homooligomer; disulfide-linked, leading to inactivation (in vitro). Interacts with PORCN. Interacts with WLS. Interacts with glypican GCP3. Interacts with PKD1 (via extracellular domain). Interacts with TMEM67. In terms of processing, glycosylation is necessary for secretion but not for activity. Palmitoleoylation is required for efficient binding to frizzled receptors. Depalmitoleoylation leads to Wnt signaling pathway inhibition. Post-translationally, proteolytic processing by TIKI1 and TIKI2 promotes oxidation and formation of large disulfide-bond oligomers, leading to inactivation of WNT5A.

It is found in the secreted. The protein resides in the extracellular space. The protein localises to the extracellular matrix. In terms of biological role, ligand for members of the frizzled family of seven transmembrane receptors. Can activate or inhibit canonical Wnt signaling, depending on receptor context. In the presence of FZD4, activates beta-catenin signaling. In the presence of ROR2, inhibits the canonical Wnt pathway by promoting beta-catenin degradation through a GSK3-independent pathway which involves down-regulation of beta-catenin-induced reporter gene expression. Suppression of the canonical pathway allows chondrogenesis to occur. Inhibits tumor formation. Stimulates cell migration. Decreases proliferation, migration, invasiveness and clonogenicity of carcinoma cells and may act as a tumor suppressor. Mediates motility of melanoma cells. Required during embryogenesis for extension of the primary anterior-posterior axis and for outgrowth of limbs and the genital tubercle. Inhibits type II collagen expression in chondrocytes. This chain is Protein Wnt-5a, found in Oryctolagus cuniculus (Rabbit).